We begin with the raw amino-acid sequence, 130 residues long: Small ribosomal subunit protein uS11c (130 aa).

It belongs to the universal ribosomal protein uS11 family. Part of the 30S ribosomal subunit.

The protein resides in the plastid. Its subcellular location is the chloroplast. This is Small ribosomal subunit protein uS11c from Mesostigma viride (Green alga).